We begin with the raw amino-acid sequence, 698 residues long: Testis-specific gene 10 protein (698 aa).

At serine 163 the chain carries Phosphoserine. The interaction with HIF1A stretch occupies residues glutamine 556–leucine 689. Over residues histidine 659–cysteine 670 the composition is skewed to polar residues. The disordered stretch occupies residues histidine 659–leucine 685. Residues histidine 671–leucine 685 show a composition bias toward basic and acidic residues. The residue at position 688 (serine 688) is a Phosphoserine.

This sequence belongs to the CEP135/TSGA10 family. As to quaternary structure, interacts with HIF1A. Post-translationally, processed into N-terminal 27-kDa and C-terminal 55-kDa fragments. As to expression, expressed in the testis, in spermatozoa (at protein level). Expressed in actively dividing fetal tissues, including sternum, intestine, limb, kidney and stomach.

It localises to the cytoplasm. It is found in the cytoskeleton. The protein localises to the microtubule organizing center. The protein resides in the centrosome. Its subcellular location is the centriole. In terms of biological role, plays a role in spermatogenesis. When overexpressed, prevents nuclear localization of HIF1A. In Homo sapiens (Human), this protein is Testis-specific gene 10 protein (TSGA10).